The chain runs to 635 residues: Interferon-induced GTP-binding protein Mx2 (635 aa).

Residues 31 to 304 (DLALPAIAVI…LVQHIEKSMP (274 aa)) enclose the Dynamin-type G domain. The interval 41-48 (GDQSSGKS) is G1 motif. Residue 41-48 (GDQSSGKS) coordinates GTP. The G2 motif stretch occupies residues 66-68 (VTR). Positions 142–145 (DLPG) are G3 motif. Residues 142–146 (DLPGI) and 211–214 (TKPD) each bind GTP. The segment at 211–214 (TKPD) is G4 motif. The G5 motif stretch occupies residues 243-246 (KCRG). The GED domain occupies 549-635 (LREMMLHLKS…MKAHNYLVEF (87 aa)).

Belongs to the TRAFAC class dynamin-like GTPase superfamily. Dynamin/Fzo/YdjA family.

Its subcellular location is the nucleus. The protein localises to the cytoplasm. In terms of biological role, does not inhibit strain RB-1 of the fish pathogen, infectious hematopoietic necrosis virus (IHNV). The polypeptide is Interferon-induced GTP-binding protein Mx2 (Oncorhynchus mykiss (Rainbow trout)).